An 87-amino-acid polypeptide reads, in one-letter code: Acyl-CoA-binding protein (87 aa).

Ser2 is modified (N-acetylserine). The ACB domain occupies 2–87 (SQAEFDKAAE…VEELKKKYGI (86 aa)). Residue Lys8 is modified to N6-acetyllysine; alternate. Lys8 is modified (N6-succinyllysine; alternate). Lys14 contributes to the an acyl-CoA binding site. N6-succinyllysine is present on Lys17. Residue Lys19 is modified to N6-acetyllysine. Phosphotyrosine is present on Tyr29. Residues 29 to 33 (YSHYK), Lys51, Lys55, and Tyr74 contribute to the an acyl-CoA site. At Lys51 the chain carries N6-acetyllysine. The residue at position 55 (Lys55) is an N6-acetyllysine; alternate. N6-succinyllysine; alternate is present on Lys55. Lys55 bears the N6-(2-hydroxyisobutyryl)lysine; alternate mark. Residue Lys55 is modified to N6-malonyllysine; alternate. Residue Lys77 is modified to N6-acetyllysine; alternate. Lys77 carries the post-translational modification N6-succinyllysine; alternate.

This sequence belongs to the ACBP family. Monomer.

The protein resides in the endoplasmic reticulum. The protein localises to the golgi apparatus. Its function is as follows. Binds medium- and long-chain acyl-CoA esters with very high affinity and may function as an intracellular carrier of acyl-CoA esters. It is also able to displace diazepam from the benzodiazepine (BZD) recognition site located on the GABA type A receptor. It is therefore possible that this protein also acts as a neuropeptide to modulate the action of the GABA receptor. The sequence is that of Acyl-CoA-binding protein (DBI) from Bos taurus (Bovine).